The sequence spans 543 residues: MTVLTHRPEWRALETHYHAICNVHLRQLFAEDPGRGERLTAEAAGLFFDYAKNRITDETLRLLIALAEACDLRARIDAMFRGERINATENRAVLHVALRAPRGAVILVDGANVVPEVHAVLDRMAAFAEQVRSGRWTGFTGKPIRNIVNIGIGGSDLGPVMAYEALRYYSDRNLTVRFVSNVDGSDFAEATRDLDPAETLFIVASKTFTTLETMTNARTARAWALAALGDEAAVARHFVAVSTNAAEVAKFGIDTANMFGFWDWVGGRYSMTSAIGLSTMIALGPERFHELLAGFHAMDEHFRTAPFDRNLPVIHGLLTIWYANFFGIETVAILPYDNYLKRFPAYLQQLTMESNGKSVTLSGAPVSYQTGMIYWGEPGTNGQHSFYQLLHQGTRLALCDFIGFAEPLNPLGNHHDLLMANMFAQAEALAFGKTTEETLAEGTPEWLAPHRTFAGNRPSNTLLAERLTPATLGALVALYEHSVFTQGAIWDINPFDQWGVELGKALAGRIVPELMSESAPHLAHDSSTNALIRRYRTLRGRVS.

Residue Glu353 is the Proton donor of the active site. Residues His384 and Lys504 contribute to the active site.

Belongs to the GPI family.

It is found in the cytoplasm. The enzyme catalyses alpha-D-glucose 6-phosphate = beta-D-fructose 6-phosphate. The protein operates within carbohydrate biosynthesis; gluconeogenesis. Its pathway is carbohydrate degradation; glycolysis; D-glyceraldehyde 3-phosphate and glycerone phosphate from D-glucose: step 2/4. Functionally, catalyzes the reversible isomerization of glucose-6-phosphate to fructose-6-phosphate. This Roseiflexus sp. (strain RS-1) protein is Glucose-6-phosphate isomerase.